The sequence spans 462 residues: NAD-capped RNA hydrolase NUDT12 (462 aa).

3 ANK repeats span residues 11 to 40 (EIVTQFHCSAAEGDIAKLTGILSHSPSLLN), 45 to 74 (NGWTALMYAARNGHPEIVQFLLEKGCDRSI), and 78 to 98 (SRQTALDIAVFWGYKHIANLL). Lysine 185 carries the post-translational modification N6-succinyllysine. Residues cysteine 284 and cysteine 287 each coordinate Zn(2+). At lysine 292 the chain carries N6-succinyllysine. 2 residues coordinate Zn(2+): cysteine 302 and cysteine 307. Substrate contacts are provided by residues tyrosine 318, 354-356 (AGF), glutamate 370, glutamate 374, and glutamate 415. The Nudix hydrolase domain occupies 319 to 453 (PRVDPVVIMQ…SRAIAHQLIK (135 aa)). Residues alanine 354, glutamate 370, glutamate 374, and glutamate 415 each contribute to the Mg(2+) site. The Nudix box motif lies at 355–376 (GFIEPGETIEDAVRREVEEESG). Residues 460–462 (PNL) carry the Microbody targeting signal motif.

It belongs to the Nudix hydrolase family. NudC subfamily. As to quaternary structure, homodimer. Homodimerization is essential for its catalytic activity and protein stability. Interacts (via ANK repeats) with BLMH. It depends on Mg(2+) as a cofactor. Zn(2+) serves as cofactor.

Its subcellular location is the cytoplasm. It localises to the peroxisome. It is found in the cytoplasmic granule. It catalyses the reaction a 5'-end NAD(+)-phospho-ribonucleoside in mRNA + H2O = a 5'-end phospho-adenosine-phospho-ribonucleoside in mRNA + beta-nicotinamide D-ribonucleotide + 2 H(+). The enzyme catalyses NAD(+) + H2O = beta-nicotinamide D-ribonucleotide + AMP + 2 H(+). The catalysed reaction is NADH + H2O = reduced beta-nicotinamide D-ribonucleotide + AMP + 2 H(+). It carries out the reaction NADPH + H2O = reduced beta-nicotinamide D-ribonucleotide + adenosine 2',5'-bisphosphate + 2 H(+). Its function is as follows. mRNA decapping enzyme that specifically removes the nicotinamide adenine dinucleotide (NAD) cap from a subset of mRNAs by hydrolyzing the diphosphate linkage to produce nicotinamide mononucleotide (NMN) and 5' monophosphate mRNA. The NAD-cap is present at the 5'-end of some RNAs; in contrast to the canonical N7 methylguanosine (m7G) cap, the NAD cap promotes mRNA decay. Preferentially acts on NAD-capped transcripts in response to nutrient stress. Also acts on free nicotinamide adenine dinucleotide molecules: hydrolyzes NAD(H) into NMN(H) and AMP, and NADPH into NMNH and 2',5'-ADP. May act to regulate the concentration of peroxisomal nicotinamide nucleotide cofactors required for oxidative metabolism in this organelle. Regulates the levels of circadian clock components PER1, PER2, PER3 and CRY2 in the liver. The sequence is that of NAD-capped RNA hydrolase NUDT12 from Pongo abelii (Sumatran orangutan).